Here is a 248-residue protein sequence, read N- to C-terminus: Methyl-coenzyme M reductase subunit gamma (248 aa).

Position 121 (Arg121) interacts with coenzyme M.

This sequence belongs to the methyl-coenzyme M reductase gamma subunit family. MCR is a hexamer of two alpha, two beta, and two gamma chains, forming a dimer of heterotrimers. Coenzyme F430 is required as a cofactor.

It localises to the cytoplasm. The catalysed reaction is coenzyme B + methyl-coenzyme M = methane + coenzyme M-coenzyme B heterodisulfide. It functions in the pathway one-carbon metabolism; methyl-coenzyme M reduction; methane from methyl-coenzyme M: step 1/1. Functionally, component of the methyl-coenzyme M reductase (MCR) I that catalyzes the reductive cleavage of methyl-coenzyme M (CoM-S-CH3 or 2-(methylthio)ethanesulfonate) using coenzyme B (CoB or 7-mercaptoheptanoylthreonine phosphate) as reductant which results in the production of methane and the mixed heterodisulfide of CoB and CoM (CoM-S-S-CoB). This is the final step in methanogenesis. This chain is Methyl-coenzyme M reductase subunit gamma (mcrG), found in Methanosarcina barkeri (strain Fusaro / DSM 804).